Reading from the N-terminus, the 232-residue chain is Phosphatidylserine decarboxylase proenzyme (232 aa).

S190 acts as the Schiff-base intermediate with substrate; via pyruvic acid in catalysis. The residue at position 190 (S190) is a Pyruvic acid (Ser); by autocatalysis.

It belongs to the phosphatidylserine decarboxylase family. PSD-A subfamily. Heterodimer of a large membrane-associated beta subunit and a small pyruvoyl-containing alpha subunit. The cofactor is pyruvate. Is synthesized initially as an inactive proenzyme. Formation of the active enzyme involves a self-maturation process in which the active site pyruvoyl group is generated from an internal serine residue via an autocatalytic post-translational modification. Two non-identical subunits are generated from the proenzyme in this reaction, and the pyruvate is formed at the N-terminus of the alpha chain, which is derived from the carboxyl end of the proenzyme. The post-translation cleavage follows an unusual pathway, termed non-hydrolytic serinolysis, in which the side chain hydroxyl group of the serine supplies its oxygen atom to form the C-terminus of the beta chain, while the remainder of the serine residue undergoes an oxidative deamination to produce ammonia and the pyruvoyl prosthetic group on the alpha chain.

Its subcellular location is the cell membrane. It catalyses the reaction a 1,2-diacyl-sn-glycero-3-phospho-L-serine + H(+) = a 1,2-diacyl-sn-glycero-3-phosphoethanolamine + CO2. Its pathway is phospholipid metabolism; phosphatidylethanolamine biosynthesis; phosphatidylethanolamine from CDP-diacylglycerol: step 2/2. Its function is as follows. Catalyzes the formation of phosphatidylethanolamine (PtdEtn) from phosphatidylserine (PtdSer). The protein is Phosphatidylserine decarboxylase proenzyme of Methylocella silvestris (strain DSM 15510 / CIP 108128 / LMG 27833 / NCIMB 13906 / BL2).